The chain runs to 850 residues: DEAD-box ATP-dependent RNA helicase 26 (850 aa).

Disordered stretches follow at residues 60–82 and 106–350; these read TRPERSQPEFARRSGAGGEIRAS and GKFT…ENDE. Residues 61–71 are compositionally biased toward basic and acidic residues; it reads RPERSQPEFAR. Position 109 is a phosphothreonine (threonine 109). A Phosphoserine modification is found at serine 110. Basic and acidic residues-rich tracts occupy residues 118 to 140 and 284 to 299; these read EVVRRNVDRDTSRGPRRGREGQS and GRNDRNVESGFRREPG. Composition is skewed to acidic residues over residues 315–325 and 336–350; these read LEEEDSSDDDE and LPSEDSSDEDDENDE. The Q motif motif lies at 382–410; it reads TRFDQFPLSPLSLKAIKDAGFETMTVVQE. The Helicase ATP-binding domain maps to 413–596; that stretch reads LPIILQGKDV…HVALKRDHEF (184 aa). ATP is bound at residue 426 to 433; the sequence is AKTGTGKT. A DEAD box motif is present at residues 544 to 547; the sequence is DEAD. In terms of domain architecture, Helicase C-terminal spans 630-777; the sequence is LLKEHIADNV…IDPEAVKRVQ (148 aa).

This sequence belongs to the DEAD box helicase family.

It catalyses the reaction ATP + H2O = ADP + phosphate + H(+). The sequence is that of DEAD-box ATP-dependent RNA helicase 26 (RH26) from Arabidopsis thaliana (Mouse-ear cress).